The sequence spans 58 residues: Gigasin-4 (58 aa).

In terms of tissue distribution, component of the organic matrix of calcified shell layers.

This is Gigasin-4 from Magallana gigas (Pacific oyster).